We begin with the raw amino-acid sequence, 1124 residues long: DNA-directed RNA polymerase subunit Rpo2 (1124 aa).

Zn(2+) is bound by residues C1061, C1064, C1079, and H1082.

The protein belongs to the RNA polymerase beta chain family. Part of the 13-subunit RNA polymerase complex. The cofactor is Zn(2+).

The protein localises to the cytoplasm. It carries out the reaction RNA(n) + a ribonucleoside 5'-triphosphate = RNA(n+1) + diphosphate. Functionally, DNA-dependent RNA polymerase (RNAP) catalyzes the transcription of DNA into RNA using the four ribonucleoside triphosphates as substrates. This subunit is involved in DNA promoter recognition. In Saccharolobus solfataricus (strain ATCC 35092 / DSM 1617 / JCM 11322 / P2) (Sulfolobus solfataricus), this protein is DNA-directed RNA polymerase subunit Rpo2.